The primary structure comprises 209 residues: Pyridoxine/pyridoxamine 5'-phosphate oxidase (209 aa).

Substrate contacts are provided by residues 7 to 10 (REDY) and Lys64. FMN contacts are provided by residues 59–64 (RIVLLK), 74–75 (FT), Arg80, and Lys81. 3 residues coordinate substrate: Tyr121, Arg125, and Ser129. Residues 138–139 (QS) and Trp182 contribute to the FMN site. 188–190 (RLH) lines the substrate pocket. Arg192 serves as a coordination point for FMN.

It belongs to the pyridoxamine 5'-phosphate oxidase family. As to quaternary structure, homodimer. It depends on FMN as a cofactor.

It catalyses the reaction pyridoxamine 5'-phosphate + O2 + H2O = pyridoxal 5'-phosphate + H2O2 + NH4(+). It carries out the reaction pyridoxine 5'-phosphate + O2 = pyridoxal 5'-phosphate + H2O2. The protein operates within cofactor metabolism; pyridoxal 5'-phosphate salvage; pyridoxal 5'-phosphate from pyridoxamine 5'-phosphate: step 1/1. Its pathway is cofactor metabolism; pyridoxal 5'-phosphate salvage; pyridoxal 5'-phosphate from pyridoxine 5'-phosphate: step 1/1. Its function is as follows. Catalyzes the oxidation of either pyridoxine 5'-phosphate (PNP) or pyridoxamine 5'-phosphate (PMP) into pyridoxal 5'-phosphate (PLP). The polypeptide is Pyridoxine/pyridoxamine 5'-phosphate oxidase (Actinobacillus pleuropneumoniae serotype 3 (strain JL03)).